The sequence spans 304 residues: MDLLTLWNLEREEVLKIIEDAEYFKKNRCGHDILKNKSIALIFESPSTRTRMSFDLAVHELGGHSLMMNEGEIHLGKKESIADTARVMSRFVDAIVARVKSHKTLEDLAEYGSVPVINALCDLAHPCQILADLLTMKENGKDFKGLKLAYFGDGNNVSNSLMIAGAILGMDVVIATPRSYEPSGLFVKKALEIIAKYGEGSLTLTDDPEIAAKDADVLYTDVWISMNDKNKNLEEILKIFPKFQINAELLSKAKEDAIVLHCLPANRGFEITDEVIDGKQSKVFDQAENRLHAQKSVLKYIFEH.

Carbamoyl phosphate contacts are provided by residues 47 to 50 (STRT), Arg98, and 125 to 128 (HPCQ). Residues Asn156, Asp221, and 225–226 (SM) each bind L-ornithine. Residues 262 to 263 (CL) and Arg290 contribute to the carbamoyl phosphate site.

The protein belongs to the aspartate/ornithine carbamoyltransferase superfamily. OTCase family.

Its subcellular location is the cytoplasm. The enzyme catalyses carbamoyl phosphate + L-ornithine = L-citrulline + phosphate + H(+). The protein operates within amino-acid biosynthesis; L-arginine biosynthesis; L-arginine from L-ornithine and carbamoyl phosphate: step 1/3. In terms of biological role, reversibly catalyzes the transfer of the carbamoyl group from carbamoyl phosphate (CP) to the N(epsilon) atom of ornithine (ORN) to produce L-citrulline. The protein is Ornithine carbamoyltransferase of Methanococcus maripaludis (strain C5 / ATCC BAA-1333).